A 359-amino-acid polypeptide reads, in one-letter code: Pyruvate dehydrogenase E1 component subunit beta, mitochondrial (359 aa).

A mitochondrion-targeting transit peptide spans 1 to 30 (MAVVAVLVRKPLEQVSGLLRRRFHRTAPAA). At Tyr67 the chain carries Phosphotyrosine. A thiamine diphosphate-binding site is contributed by Glu89. 5 residues coordinate K(+): Ile142, Ala190, Ile191, Asp193, and Asn195. Lys354 is subject to N6-acetyllysine.

Heterotetramer of two PDHA1 and two PDHB subunits. The heterotetramer interacts with DLAT, and is part of the multimeric pyruvate dehydrogenase complex that contains multiple copies of pyruvate dehydrogenase (E1), dihydrolipoamide acetyltransferase (DLAT, E2) and lipoamide dehydrogenase (DLD, E3). These subunits are bound to an inner core composed of about 48 DLAT and 12 PDHX molecules. Interacts with DLAT. Thiamine diphosphate serves as cofactor.

It localises to the mitochondrion matrix. The enzyme catalyses N(6)-[(R)-lipoyl]-L-lysyl-[protein] + pyruvate + H(+) = N(6)-[(R)-S(8)-acetyldihydrolipoyl]-L-lysyl-[protein] + CO2. The pyruvate dehydrogenase complex catalyzes the overall conversion of pyruvate to acetyl-CoA and CO(2), and thereby links the glycolytic pathway to the tricarboxylic cycle. The polypeptide is Pyruvate dehydrogenase E1 component subunit beta, mitochondrial (PDHB) (Bos taurus (Bovine)).